The chain runs to 306 residues: Ribosomal protein L11 methyltransferase (306 aa).

4 residues coordinate S-adenosyl-L-methionine: Thr-154, Gly-179, Asp-201, and Asn-242.

Belongs to the methyltransferase superfamily. PrmA family.

It localises to the cytoplasm. The catalysed reaction is L-lysyl-[protein] + 3 S-adenosyl-L-methionine = N(6),N(6),N(6)-trimethyl-L-lysyl-[protein] + 3 S-adenosyl-L-homocysteine + 3 H(+). Its function is as follows. Methylates ribosomal protein L11. The polypeptide is Ribosomal protein L11 methyltransferase (Xanthomonas campestris pv. campestris (strain 8004)).